A 1059-amino-acid chain; its full sequence is Transmembrane protease serine 9 (1059 aa).

The Cytoplasmic portion of the chain corresponds to Met-1–Ala-29. A helical; Signal-anchor for type II membrane protein transmembrane segment spans residues Ser-30–Leu-50. Over Ser-51 to Glu-1059 the chain is Extracellular. The LDL-receptor class A domain maps to Arg-153–Glu-190. Disulfide bonds link Cys-154-Cys-166, Cys-161-Cys-180, Cys-174-Cys-189, and Cys-228-Cys-244. The Peptidase S1 1 domain maps to Ile-203–Thr-436. Active-site charge relay system residues include His-243 and Asp-292. Intrachain disulfides connect Cys-326–Cys-393, Cys-358–Cys-372, and Cys-383–Cys-412. Ser-387 functions as the Charge relay system in the catalytic mechanism. The tract at residues Ala-443–Pro-469 is disordered. The 233-residue stretch at Val-504–Ser-736 folds into the Peptidase S1 2 domain. The cysteines at positions 529 and 545 are disulfide-linked. The active-site Charge relay system is the His-544. Asn-547 carries N-linked (GlcNAc...) asparagine glycosylation. Catalysis depends on Asp-592, which acts as the Charge relay system. Cystine bridges form between Cys-626-Cys-693, Cys-658-Cys-672, and Cys-683-Cys-712. N-linked (GlcNAc...) asparagine glycans are attached at residues Asn-638 and Asn-663. Ser-687 serves as the catalytic Charge relay system. Residues Thr-758–Leu-814 are disordered. Residues Val-780–Gly-798 show a composition bias toward polar residues. The N-linked (GlcNAc...) asparagine glycan is linked to Asn-786. Positions Ile-827–Gln-1058 constitute a Peptidase S1 3 domain. Cystine bridges form between Cys-853–Cys-869, Cys-949–Cys-1015, Cys-980–Cys-994, and Cys-1005–Cys-1034.

This sequence belongs to the peptidase S1 family. Proteolytically cleaved to generate 3 independent serine protease chains. The cleaved chains may remain attached to the membrane thanks to disulfide bonds. It is unclear whether cleavage always takes place. Expressed in fetal human tissues, such as kidney, liver, lung and brain, and in a variety of tumor cell lines. Weakly expressed in adult tissues including skeletal muscle, liver, placenta and heart.

It localises to the cell membrane. With respect to regulation, inhibited by serine protease inhibitors PMSF and 4-(2-aminoethyl)benzenesulfonyl fluoride, but not by EDTA. In terms of biological role, serase-1 and serase-2 are serine proteases that hydrolyze the peptides N-t-Boc-Gln-Ala-Arg-AMC and N-t-Boc-Gln-Gly-Arg-AMC. In contrast, N-t-Boc-Ala-Phe-Lys-AMC and N-t-Boc-Ala-Pro-Ala-AMC are not significantly hydrolyzed. In Homo sapiens (Human), this protein is Transmembrane protease serine 9 (TMPRSS9).